Reading from the N-terminus, the 154-residue chain is Protein X (154 aa).

Residues 68–117 are mitochondrial targeting sequence; that stretch reads PCALRFTSARCMETTVNAHQILPKVLHKRTLGLPAMSTTDLEAYFKDCVF.

This sequence belongs to the orthohepadnavirus protein X family. In terms of assembly, may form homodimer. May interact with host CEBPA, CFLAR, CREB1, DDB1, E4F1, HBXIP, HSPD1/HSP60, NFKBIA, POLR2E and SMAD4. Interacts with host SMC5-SMC6 complex and induces its degradation. Interacts with host TRPC4AP; leading to prevent ubiquitination of TRPC4AP. Interacts with host PLSCR1; this interaction promotes ubiquitination and degradation of HBx and impairs HBx-mediated cell proliferation. A fraction may be phosphorylated in insect cells and HepG2 cells, a human hepatoblastoma cell line. Phosphorylated in vitro by host protein kinase C or mitogen-activated protein kinase. N-acetylated in insect cells.

The protein resides in the host cytoplasm. It localises to the host nucleus. The protein localises to the host mitochondrion. In terms of biological role, multifunctional protein that plays a role in silencing host antiviral defenses and promoting viral transcription. Does not seem to be essential for HBV infection. May be directly involved in development of cirrhosis and liver cancer (hepatocellular carcinoma). Most of cytosolic activities involve modulation of cytosolic calcium. The effect on apoptosis is controversial depending on the cell types in which the studies have been conducted. May induce apoptosis by localizing in mitochondria and causing loss of mitochondrial membrane potential. May also modulate apoptosis by binding host CFLAR, a key regulator of the death-inducing signaling complex (DISC). Promotes viral transcription by using the host E3 ubiquitin ligase DDB1 to target the SMC5-SMC6 complex to proteasomal degradation. This host complex would otherwise bind to viral episomal DNA, and prevents its transcription. Moderately stimulates transcription of many different viral and cellular transcription elements. Promoters and enhancers stimulated by HBx contain DNA binding sites for NF-kappa-B, AP-1, AP-2, c-EBP, ATF/CREB, or the calcium-activated factor NF-AT. The chain is Protein X from Homo sapiens (Human).